We begin with the raw amino-acid sequence, 635 residues long: Protein MICRORCHIDIA 1 (635 aa).

Residues 491–511 (RTVIPDQPPTVNTYNPSPLPS) are disordered. A coiled-coil region spans residues 588 to 635 (MRCEEYVKKENEVEQTVKSLEKELEEIKSKCAQLALLVDAKKKEMQQV).

Belongs to the MORC ATPase protein family. As to quaternary structure, homodimer and heterodimer with MORC6. Component of an RNA-directed DNA methylation (RdDM) complex that contains at least MORC6, MORC1/CRT1, MORC2, SWI3D and SUVH9. Binds directly to SUVH2 and SUVH9. Interacts with the resistance proteins RCY1, RPM1, SNC1, RPP8, SSI4 and RPS2. The interactions with various resistance proteins are disrupted when these resistance proteins are activated. Interacts with the PAMP recognition receptor FLS2. It depends on Mg(2+) as a cofactor. The cofactor is Mn(2+). As to expression, expressed constitutively.

The protein localises to the nucleus. It localises to the endosome. Its function is as follows. Mediator of defense signaling triggered by distinct classes of R proteins. Required during hypersensitive response (HR) that confers disease resistance to turnip crinkle virus (TCV). Exhibits ATPase activity. Contributes to resistance against Pseudomonas syringae and Hyaloperonospora arabidopsidis, at early stages prior to cytosolic calcium ions Ca(2+) accumulation. Required for pathogen-associated molecular pattern (PAMP)-triggered immunity (PTI), basal resistance, non-host resistance and systemic acquired resistance (SAR). Binds DNA/RNA in a non-specific manner and exhibits endonuclease activity. Probably involved in DNA repair. Required for both RPP8- and SSI4-mediated resistance responses, thus being involved in both TIR- and CC-NB-LRR pathways. Involved in RNA-directed DNA methylation (RdDM) as a component of the RdDM machinery and required for gene silencing. May also be involved in the regulation of chromatin architecture to maintain gene silencing. This chain is Protein MICRORCHIDIA 1, found in Arabidopsis thaliana (Mouse-ear cress).